A 273-amino-acid chain; its full sequence is MDRYLVFGHPVRHSKSPFIHTLFARQTQQELEYGLAEPAVEEFATSLRAFFAQGGKGCNVTVPFKEQAFALVDRLSPRARRAGAVNTIKLTDDGVLLGDNTDGAGLVADLKAHGVALAGSRILLLGAGGAARGALAPLLAEQPEALVIANRTHARAEQLAAEFRDLGAVSAQTYERLGGHFDLIINSTSASLQGELPPLVPALIHADIAIYDMMYGATDTPFIAWAKGQGARQTVDGLGMLVEQAAEAFTVWRGIRPGTKQVLRELKRNLGTL.

Residues 14-16 (SKS) and T61 each bind shikimate. K65 (proton acceptor) is an active-site residue. Shikimate-binding residues include N86 and D102. Residues 126-130 (GAGGA), 150-155 (NRTHAR), and M213 contribute to the NADP(+) site. Y215 contacts shikimate. Residue G237 participates in NADP(+) binding.

The protein belongs to the shikimate dehydrogenase family. As to quaternary structure, homodimer.

The catalysed reaction is shikimate + NADP(+) = 3-dehydroshikimate + NADPH + H(+). The protein operates within metabolic intermediate biosynthesis; chorismate biosynthesis; chorismate from D-erythrose 4-phosphate and phosphoenolpyruvate: step 4/7. In terms of biological role, involved in the biosynthesis of the chorismate, which leads to the biosynthesis of aromatic amino acids. Catalyzes the reversible NADPH linked reduction of 3-dehydroshikimate (DHSA) to yield shikimate (SA). The sequence is that of Shikimate dehydrogenase (NADP(+)) from Aeromonas hydrophila subsp. hydrophila (strain ATCC 7966 / DSM 30187 / BCRC 13018 / CCUG 14551 / JCM 1027 / KCTC 2358 / NCIMB 9240 / NCTC 8049).